A 105-amino-acid chain; its full sequence is Ribosomal silencing factor RsfS (105 aa).

Belongs to the Iojap/RsfS family. As to quaternary structure, interacts with ribosomal protein uL14 (rplN).

The protein localises to the cytoplasm. Functions as a ribosomal silencing factor. Interacts with ribosomal protein uL14 (rplN), blocking formation of intersubunit bridge B8. Prevents association of the 30S and 50S ribosomal subunits and the formation of functional ribosomes, thus repressing translation. The protein is Ribosomal silencing factor RsfS of Escherichia coli O6:H1 (strain CFT073 / ATCC 700928 / UPEC).